The primary structure comprises 213 residues: Serine acetyltransferase (213 aa).

This sequence belongs to the transferase hexapeptide repeat family.

The protein localises to the cytoplasm. It carries out the reaction L-serine + acetyl-CoA = O-acetyl-L-serine + CoA. It participates in amino-acid biosynthesis; L-cysteine biosynthesis; L-cysteine from L-serine: step 1/2. The protein is Serine acetyltransferase (cysE) of Staphylococcus aureus (strain COL).